The chain runs to 313 residues: Dihydroorotate dehydrogenase B (NAD(+)), catalytic subunit (313 aa).

Residues Ser-21 and 45–46 (KA) contribute to the FMN site. Residues Lys-45 and 69–73 (NAIGL) contribute to the substrate site. Residues Asn-99 and Asn-127 each contribute to the FMN site. Asn-127 contacts substrate. Residue Cys-130 is the Nucleophile of the active site. Ile-191 provides a ligand contact to FMN. A substrate-binding site is contributed by 192 to 193 (NT). FMN contacts are provided by residues Gly-217, 243 to 244 (GG), and 265 to 266 (GT).

This sequence belongs to the dihydroorotate dehydrogenase family. Type 1 subfamily. In terms of assembly, heterotetramer of 2 PyrK and 2 PyrD type B subunits. It depends on FMN as a cofactor.

The protein localises to the cytoplasm. It carries out the reaction (S)-dihydroorotate + NAD(+) = orotate + NADH + H(+). The protein operates within pyrimidine metabolism; UMP biosynthesis via de novo pathway; orotate from (S)-dihydroorotate (NAD(+) route): step 1/1. Catalyzes the conversion of dihydroorotate to orotate with NAD(+) as electron acceptor. This Bacillus caldolyticus protein is Dihydroorotate dehydrogenase B (NAD(+)), catalytic subunit (pyrD).